Consider the following 310-residue polypeptide: Oxygen-dependent coproporphyrinogen-III oxidase (310 aa).

Residue Ser97 participates in substrate binding. Residues His101 and His111 each coordinate a divalent metal cation. His111 functions as the Proton donor in the catalytic mechanism. Substrate is bound at residue 113 to 115; it reads NFR. The a divalent metal cation site is built by His150 and His180. The segment at 245 to 280 is important for dimerization; that stretch reads YVEFNLLYDRGTRFGLEFGGRTESILMSLPPRVVWR. 263–265 serves as a coordination point for substrate; that stretch reads GGR.

It belongs to the aerobic coproporphyrinogen-III oxidase family. As to quaternary structure, homodimer. A divalent metal cation is required as a cofactor.

It is found in the cytoplasm. The catalysed reaction is coproporphyrinogen III + O2 + 2 H(+) = protoporphyrinogen IX + 2 CO2 + 2 H2O. Its pathway is porphyrin-containing compound metabolism; protoporphyrin-IX biosynthesis; protoporphyrinogen-IX from coproporphyrinogen-III (O2 route): step 1/1. Its function is as follows. Involved in the heme biosynthesis. Catalyzes the aerobic oxidative decarboxylation of propionate groups of rings A and B of coproporphyrinogen-III to yield the vinyl groups in protoporphyrinogen-IX. The chain is Oxygen-dependent coproporphyrinogen-III oxidase from Coxiella burnetii (strain Dugway 5J108-111).